Here is a 252-residue protein sequence, read N- to C-terminus: Trans-aconitate 2-methyltransferase (252 aa).

This sequence belongs to the methyltransferase superfamily. Tam family.

Its subcellular location is the cytoplasm. The enzyme catalyses trans-aconitate + S-adenosyl-L-methionine = (E)-3-(methoxycarbonyl)pent-2-enedioate + S-adenosyl-L-homocysteine. In terms of biological role, catalyzes the S-adenosylmethionine monomethyl esterification of trans-aconitate. The chain is Trans-aconitate 2-methyltransferase from Escherichia coli O1:K1 / APEC.